A 597-amino-acid chain; its full sequence is MFS-type transporter FPY5 (597 aa).

A disordered region spans residues 1–55 (MSETTGLPLKHLQGSPPGTPVNTNNESNEASPDDGCRLPDTVTEAEASSDNHGSV). Polar residues-rich tracts occupy residues 20-30 (PVNTNNESNEA) and 46-55 (EASSDNHGSV). N25 carries N-linked (GlcNAc...) asparagine glycosylation. The N-linked (GlcNAc...) asparagine glycan is linked to N72. Transmembrane regions (helical) follow at residues 94-114 (LSLL…VSIV), 120-140 (FNMA…FLII), 147-167 (IFGC…FSMA), 183-203 (FQGM…PLMV), 214-234 (IMSS…GAIT), 241-261 (WVFY…AFSV), 286-306 (VDFV…FALE), 316-336 (SGAI…FIAW), and 360-380 (FVMG…AALI). An N-linked (GlcNAc...) asparagine glycan is attached at N390. 5 helical membrane passes run 402–422 (LPLL…VSKL), 424–444 (VPPL…VGLY), 463–483 (IMGL…PLVV), 498–518 (IRVL…INHI), and 562–582 (EQMR…VLLV).

This sequence belongs to the major facilitator superfamily. TCR/Tet family.

It localises to the membrane. It functions in the pathway secondary metabolite biosynthesis. Functionally, MFS-type transporter; part of the gene cluster that mediates the biosynthesis of the gamma-pyrones fusapyrone (FPY) and deoxyfusapyrone (dFPY). The polypeptide is MFS-type transporter FPY5 (Fusarium mangiferae (Mango malformation disease fungus)).